A 577-amino-acid polypeptide reads, in one-letter code: MFS-type transporter pgmG (577 aa).

The interval 1–32 is disordered; the sequence is MSETVTQTETDQRPATARSLGAEEKEAKSDEQ. Basic and acidic residues predominate over residues 21-31; that stretch reads GAEEKEAKSDE. Helical transmembrane passes span 45–65, 84–104, 111–131, 141–161, 174–194, 218–238, 259–279, and 292–312; these read FIVI…NTIV, WLSV…SKIY, WLYL…GAAP, ALAG…LSVN, TGLT…GFAV, PLTV…LFML, LGTI…NFGG, and CFVV…YCIG. An N-linked (GlcNAc...) asparagine glycan is attached at asparagine 317. Residues 330-350 form a helical membrane-spanning segment; the sequence is FIILFVQTASVATVFFVPIYF. A glycan (N-linked (GlcNAc...) asparagine) is linked at asparagine 360. 5 helical membrane-spanning segments follow: residues 363-383, 395-415, 426-446, 457-477, and 532-552; these read AIDA…AMIL, MPWY…MYTI, GYMI…FAVA, VATG…LAIA, and ISQV…LAIF.

This sequence belongs to the major facilitator superfamily. TCR/Tet family.

It localises to the membrane. Functionally, MFS-type transporter; part of the gene cluster that mediates the biosynthesis of pleosporalin A, ascomycone A, as well as a third cryptic naphthoquinone derived pigment, all responsible for the coloration of conidia. Seems not to be involved in pigment biosynthesis although its expression is regulated by the cluster-specific transcription factor pgmR. This chain is MFS-type transporter pgmG, found in Aspergillus terreus (strain NIH 2624 / FGSC A1156).